Consider the following 530-residue polypeptide: Light-independent protochlorophyllide reductase subunit B (530 aa).

D36 contacts [4Fe-4S] cluster. D290 (proton donor) is an active-site residue. G425–L426 is a binding site for substrate.

The protein belongs to the ChlB/BchB/BchZ family. As to quaternary structure, protochlorophyllide reductase is composed of three subunits; ChlL, ChlN and ChlB. Forms a heterotetramer of two ChlB and two ChlN subunits. [4Fe-4S] cluster serves as cofactor.

The enzyme catalyses chlorophyllide a + oxidized 2[4Fe-4S]-[ferredoxin] + 2 ADP + 2 phosphate = protochlorophyllide a + reduced 2[4Fe-4S]-[ferredoxin] + 2 ATP + 2 H2O. It participates in porphyrin-containing compound metabolism; chlorophyll biosynthesis (light-independent). In terms of biological role, component of the dark-operative protochlorophyllide reductase (DPOR) that uses Mg-ATP and reduced ferredoxin to reduce ring D of protochlorophyllide (Pchlide) to form chlorophyllide a (Chlide). This reaction is light-independent. The NB-protein (ChlN-ChlB) is the catalytic component of the complex. This Synechococcus sp. (strain WH7803) protein is Light-independent protochlorophyllide reductase subunit B.